We begin with the raw amino-acid sequence, 326 residues long: Acetyl-coenzyme A carboxylase carboxyl transferase subunit alpha (326 aa).

Residues 46-300 (EIEARAAELR…KEALLRHLDE (255 aa)) enclose the CoA carboxyltransferase C-terminal domain.

This sequence belongs to the AccA family. As to quaternary structure, acetyl-CoA carboxylase is a heterohexamer composed of biotin carboxyl carrier protein (AccB), biotin carboxylase (AccC) and two subunits each of ACCase subunit alpha (AccA) and ACCase subunit beta (AccD).

The protein localises to the cytoplasm. It carries out the reaction N(6)-carboxybiotinyl-L-lysyl-[protein] + acetyl-CoA = N(6)-biotinyl-L-lysyl-[protein] + malonyl-CoA. It functions in the pathway lipid metabolism; malonyl-CoA biosynthesis; malonyl-CoA from acetyl-CoA: step 1/1. Its function is as follows. Component of the acetyl coenzyme A carboxylase (ACC) complex. First, biotin carboxylase catalyzes the carboxylation of biotin on its carrier protein (BCCP) and then the CO(2) group is transferred by the carboxyltransferase to acetyl-CoA to form malonyl-CoA. This Gloeobacter violaceus (strain ATCC 29082 / PCC 7421) protein is Acetyl-coenzyme A carboxylase carboxyl transferase subunit alpha.